We begin with the raw amino-acid sequence, 292 residues long: ATP synthase gamma chain (292 aa).

Belongs to the ATPase gamma chain family. In terms of assembly, F-type ATPases have 2 components, CF(1) - the catalytic core - and CF(0) - the membrane proton channel. CF(1) has five subunits: alpha(3), beta(3), gamma(1), delta(1), epsilon(1). CF(0) has three main subunits: a, b and c.

The protein localises to the cell inner membrane. Produces ATP from ADP in the presence of a proton gradient across the membrane. The gamma chain is believed to be important in regulating ATPase activity and the flow of protons through the CF(0) complex. This is ATP synthase gamma chain from Rhodopseudomonas palustris (strain BisB18).